The chain runs to 78 residues: MTDSIPKKPLKKGSLVFVDKENYIKSIEALASDNDLPNYVFEGPGEILSLKDEYAQVRWRRPVPDVWLKLDQLKEYTH.

Belongs to the complex I NdhO subunit family. NDH-1 can be composed of about 15 different subunits; different subcomplexes with different compositions have been identified which probably have different functions.

It is found in the cellular thylakoid membrane. The catalysed reaction is a plastoquinone + NADH + (n+1) H(+)(in) = a plastoquinol + NAD(+) + n H(+)(out). The enzyme catalyses a plastoquinone + NADPH + (n+1) H(+)(in) = a plastoquinol + NADP(+) + n H(+)(out). Functionally, NDH-1 shuttles electrons from an unknown electron donor, via FMN and iron-sulfur (Fe-S) centers, to quinones in the respiratory and/or the photosynthetic chain. The immediate electron acceptor for the enzyme in this species is believed to be plastoquinone. Couples the redox reaction to proton translocation, and thus conserves the redox energy in a proton gradient. Cyanobacterial NDH-1 also plays a role in inorganic carbon-concentration. This chain is NAD(P)H-quinone oxidoreductase subunit O, found in Prochlorococcus marinus (strain AS9601).